The chain runs to 333 residues: MTEGNFVDYVKIYVSSGKGGKGSTHLHREKFIEKGGPDGGDGGRGGHVYLVGNKGLWTLFHLKFARHIKAGHGGDGGSDRSTGADGEDKFIEVPLGTVVKDKETGEVLFEITEDGEKRILAKGGKGGLGNWHFRSSTNQTPRYAQPGLPGLEMDVILELKVLADVGLVGFPNAGKSTLLSVLTSAKPKIADYPFTTLKPNLGIVAYRDFQSFVIADIPGIIEGAAEGKGLGHYFLRHIERNSTLLFLVPVDTPDIKAEYDILVNELTKYNPEMLDKERLLVISKCDMLDDELKAELKAELDVSFKDIPYMLISSVAQQGLTDLKDKLWKMLNE.

The Obg domain maps to 4–162 (GNFVDYVKIY…MDVILELKVL (159 aa)). The region spanning 163 to 332 (ADVGLVGFPN…LKDKLWKMLN (170 aa)) is the OBG-type G domain. Residues 169–176 (GFPNAGKS), 194–198 (FTTLK), 216–219 (DIPG), 283–286 (SKCD), and 313–315 (SSV) contribute to the GTP site. Mg(2+)-binding residues include serine 176 and threonine 196.

Belongs to the TRAFAC class OBG-HflX-like GTPase superfamily. OBG GTPase family. As to quaternary structure, monomer. The cofactor is Mg(2+).

The protein localises to the cytoplasm. Its function is as follows. An essential GTPase which binds GTP, GDP and possibly (p)ppGpp with moderate affinity, with high nucleotide exchange rates and a fairly low GTP hydrolysis rate. Plays a role in control of the cell cycle, stress response, ribosome biogenesis and in those bacteria that undergo differentiation, in morphogenesis control. The chain is GTPase Obg from Flavobacterium johnsoniae (strain ATCC 17061 / DSM 2064 / JCM 8514 / BCRC 14874 / CCUG 350202 / NBRC 14942 / NCIMB 11054 / UW101) (Cytophaga johnsonae).